Consider the following 310-residue polypeptide: Glutaminase (310 aa).

7 residues coordinate substrate: serine 67, asparagine 118, glutamate 161, asparagine 168, tyrosine 192, tyrosine 244, and valine 262.

This sequence belongs to the glutaminase family. In terms of assembly, homotetramer.

The enzyme catalyses L-glutamine + H2O = L-glutamate + NH4(+). This chain is Glutaminase, found in Legionella pneumophila subsp. pneumophila (strain Philadelphia 1 / ATCC 33152 / DSM 7513).